The following is a 369-amino-acid chain: Glutamate 5-kinase (369 aa).

Lys9 is a binding site for ATP. 3 residues coordinate substrate: Ser49, Asp136, and Asn148. Residues 168 to 169 (TD) and 210 to 216 (TGGMLTK) contribute to the ATP site. In terms of domain architecture, PUA spans 275–355 (RGSVYVDEGA…KGVFIHRDDW (81 aa)).

The protein belongs to the glutamate 5-kinase family.

The protein resides in the cytoplasm. It carries out the reaction L-glutamate + ATP = L-glutamyl 5-phosphate + ADP. It functions in the pathway amino-acid biosynthesis; L-proline biosynthesis; L-glutamate 5-semialdehyde from L-glutamate: step 1/2. Its function is as follows. Catalyzes the transfer of a phosphate group to glutamate to form L-glutamate 5-phosphate. This is Glutamate 5-kinase from Neisseria meningitidis serogroup B (strain ATCC BAA-335 / MC58).